Reading from the N-terminus, the 437-residue chain is MAASSWRGAVLLRTVSGLWQAGPDAAREWMTRLPSLLGFQQRCVSCVAGPAFSGPRLASASRPNGQNSALDCFLGLSQPDNSLPFRVPAVSVHRDEQDLLLVHRPDMPENPRVLRVVLLGAPNAGKSTLSNQLLGRKVFPVSKKVHTTRSQALGVITEKETQVILLDTPGLISPAKQKRHHLELSLLEDPWKSMESADLVVVLVDVSDKWTRNQLSPQVLRCLTQFSQVPSILVMNKVDCLKQKSVLLELTAALTEGVVNGKKLKTKQALRSRPDTHCPSPAAQGPNPQPVRDPQQMGWPHFQEIFMLSALSQEDVKTLKQYLLAQARPGPWEFHSEVLTSQTPEEICANMIREKLLEYLPEEVPYNVQQKTVVWDEGPSGELVIEQKLLVSKESHMKILIGPKGYLIAQIAQEVGRDLMNIFLCEVQLRLSVKLLK.

The N-terminal 43 residues, 1 to 43 (MAASSWRGAVLLRTVSGLWQAGPDAAREWMTRLPSLLGFQQRC), are a transit peptide targeting the mitochondrion. In terms of domain architecture, Era-type G spans 112–330 (RVLRVVLLGA…QYLLAQARPG (219 aa)). The interval 120–127 (GAPNAGKS) is G1. 120–127 (GAPNAGKS) provides a ligand contact to GTP. Positions 146-150 (HTTRS) are G2. A G3 region spans residues 167–170 (DTPG). 167 to 171 (DTPGL) provides a ligand contact to GTP. S173 is modified (phosphoserine). 236 to 239 (NKVD) contributes to the GTP binding site. The segment at 236–239 (NKVD) is G4. Positions 264 to 296 (LKTKQALRSRPDTHCPSPAAQGPNPQPVRDPQQ) are disordered. Residues 308-310 (LSA) form a G5 region. In terms of domain architecture, KH type-2 spans 360–437 (LPEEVPYNVQ…QLRLSVKLLK (78 aa)).

Belongs to the TRAFAC class TrmE-Era-EngA-EngB-Septin-like GTPase superfamily. Era GTPase family.

The protein localises to the mitochondrion matrix. It localises to the mitochondrion inner membrane. In terms of biological role, probable GTPase that plays a role in the mitochondrial ribosomal small subunit assembly. Specifically binds the 12S mitochondrial rRNA (12S mt-rRNA) to a 33 nucleotide section delineating the 3' terminal stem-loop region. May act as a chaperone that protects the 12S mt-rRNA on the 28S mitoribosomal subunit during ribosomal small subunit assembly. In Bos taurus (Bovine), this protein is GTPase Era, mitochondrial (ERAL1).